The following is an 876-amino-acid chain: AP-1 complex subunit gamma-1 (876 aa).

HEAT repeat units lie at residues 97-135 (DERQEVLMLVTNSLKQDLNHSNQYVVGLALCALGNICSA), 136-173 (EMARDLAPEVERLIQFRDPNIRKKAALCSTRIIRKVPD), 248-284 (FLHIRLLRLLRVLGQGDADASDLMTDILAQVATKTES), 308-345 (SLRVLAINILGRFLSNRDNNIRYVALNMLMKAITFDDQ), 346-382 (AVQRHRVTILECVKDPDASIRKRALELVTLLVNENNV), 384-417 (QLTKELIDYLEISDEDFKEDLSAKICFIVEKFSP), 418-454 (EKLWYIDQMLKVLCEAGKFVKDDVWHALIVVISNASE), 506-545 (VTESDAVDVIEDAITRHNSDSTTKAMALVALLKLSSRFPS), and 560-599 (SLLLEMQQRAIEYNSIVDRHKNIRSSLVDRMPVLDEATFN). Residues 756-873 (PAYAPIVAYE…LEEGQVSNFP (118 aa)) enclose the GAE domain.

This sequence belongs to the adaptor complexes large subunit family. Adaptor protein complex 1 (AP-1) is a heterotetramer composed of two large adaptins (gamma-type subunit and beta-type subunit), a medium adaptin (mu-type subunit) and a small adaptin (sigma-type subunit). Binds to EPSIN1. Interacts with DRP2A/ADL6 (via C-terminus).

Its subcellular location is the golgi apparatus. It is found in the cytoplasmic vesicle. The protein localises to the clathrin-coated vesicle membrane. Functionally, subunit of clathrin-associated adaptor protein complex 1 that plays a role in protein sorting at the trans-Golgi network and early endosomes (TGN/EE). The AP complexes mediate both the recruitment of clathrin to membranes and the recognition of sorting signals within the cytosolic tails of transmembrane cargo molecules. The polypeptide is AP-1 complex subunit gamma-1 (GAMMA-ADR) (Arabidopsis thaliana (Mouse-ear cress)).